Consider the following 613-residue polypeptide: Putative adenosylhomocysteinase 3 (613 aa).

Low complexity-rich tracts occupy residues 1 to 14 (MSVQ…AAKV) and 35 to 44 (AAAVGAMVPP). The interval 1–186 (MSVQVVSAAA…KQQKNSKGSS (186 aa)) is disordered. Ser-2 carries the post-translational modification N-acetylserine. The LISN domain, inhibits interaction with ITPR1 stretch occupies residues 2–111 (SVQVVSAAAA…DGGEALVSPD (110 aa)). The span at 52 to 68 (APAPAPAAERPPAPGPG) shows a compositional bias: pro residues. Positions 70-80 (GPTAALSPAAG) are enriched in low complexity. Ser-109 bears the Phosphoserine mark. The span at 137-146 (RPTKIGRRSL) shows a compositional bias: basic residues. Low complexity predominate over residues 147–166 (SRSISQSSTDSYSSAASYTD). Phosphoserine is present on residues Ser-151, Ser-154, Ser-157, and Ser-160. Thr-238, Asp-312, and Glu-337 together coordinate substrate. NAD(+) is bound at residue 338–340 (SVT). Positions 367 and 371 each coordinate substrate. Residues Asn-372, 403-408 (GEVGKG), Glu-424, Asn-459, 480-482 (MGH), and Asn-527 contribute to the NAD(+) site.

The protein belongs to the adenosylhomocysteinase family. As to quaternary structure, homotetramer. Forms heteromultimers with AHCYL1 (via the C-terminal region). Interacts with ITPR1; with lower affinity than AHCYL1 and maybe via ITPR1. Interacts with SLC4A4. Interacts with ZCCHC4. NAD(+) serves as cofactor. In terms of processing, phosphorylated during neuronal differentiation at the LISN domain. As to expression, highly expressed in cerebrum, cerebellum and kidney. Also expressed in thymus, spleen, testis, ovary and, at lower, levels in lung and liver (at protein level). In cerebellum, expressed in interneurons.

It is found in the cytoplasm. The protein localises to the microsome. The catalysed reaction is S-adenosyl-L-homocysteine + H2O = L-homocysteine + adenosine. The protein operates within amino-acid biosynthesis; L-homocysteine biosynthesis; L-homocysteine from S-adenosyl-L-homocysteine: step 1/1. Functionally, may regulate the electrogenic sodium/bicarbonate cotransporter SLC4A4 activity and Mg(2+)-sensitivity. On the contrary of its homolog AHCYL1, does not regulate ITPR1 sensitivity to inositol 1,4,5-trisphosphate. In Mus musculus (Mouse), this protein is Putative adenosylhomocysteinase 3 (Ahcyl2).